The chain runs to 413 residues: MRLFPVRFSAASSSMASLAKMLDFYSGFNPSPLSIKQFMDFGQNACEKKSYIFLRKELPVRLANIMKEIALLPDNLLHTRSVSEVSSWYVKSFEDVLVYEKAEPTHDNLQKFVADLDLIRNRHNDVVQTMAQGVIEMKENEGGQVDAPTESSIQYFLDRLYMSRISIRMLINQHTLLFGGNPHAGGRHIGCLDPACDLSDVVRDAYENARFLCDQYYLTSPALEIQQHSSEPGDNLPIRTVYVPSHLYYMLFELFKNSMRAVVEHHGHDNNDTLPPLKVAICKGKEDICVKISDQGGGIPRSQTDQLFKYMYSTAPQPSKSDLHTVPLAGYGYGLPISRLYARYFHGDIVLLSCEGFGTDAIIYLKALSDEANELLPIFNKTSSKFYRATVPTGDWSNQVKYAKKKKTSAVNQ.

Positions 137 to 369 (MKENEGGQVD…DAIIYLKALS (233 aa)) constitute a Histidine kinase domain. ATP-binding positions include 253-260 (ELFKNSMR), Asp-294, 313-314 (ST), and 330-335 (GYGYGL).

Belongs to the PDK/BCKDK protein kinase family.

The protein resides in the mitochondrion matrix. The enzyme catalyses L-seryl-[pyruvate dehydrogenase E1 alpha subunit] + ATP = O-phospho-L-seryl-[pyruvate dehydrogenase E1 alpha subunit] + ADP + H(+). Inhibits the mitochondrial pyruvate dehydrogenase complex by phosphorylation of the E1 alpha subunit, thus contributing to the regulation of glucose metabolism. This Drosophila melanogaster (Fruit fly) protein is [Pyruvate dehydrogenase (acetyl-transferring)] kinase, mitochondrial (Pdk).